The primary structure comprises 585 residues: Arginine--tRNA ligase (585 aa).

A 'HIGH' region motif is present at residues Ala131–His141.

It belongs to the class-I aminoacyl-tRNA synthetase family. Monomer.

The protein localises to the cytoplasm. It catalyses the reaction tRNA(Arg) + L-arginine + ATP = L-arginyl-tRNA(Arg) + AMP + diphosphate. The sequence is that of Arginine--tRNA ligase from Rhizobium etli (strain CIAT 652).